The following is a 401-amino-acid chain: MITLEDIKEAQRTLKNVVHRTALAYSSVLSEVTGGEIYLKMENLQKTGSFKIRGAYNKIAHLSEEERKRGVVAASAGNHAQGVALAAQIFGIPATIVMPRYAPLSKITKTRNLGAQVILEGNIFDEAYEAALRIQEKTGAVFVHPFNDPHVIAGQGTIGLEIMEDLPDVEVVVVPVGGGGLISGVSVAIKSMNPEVKVIGVQTENMPSMIASLRRGRAERVEGKPTLADGIAVKKPGDLTFELVKKYVDEMVAVNEEEIADAILFLLEQAKVVAEGAGAVGVAAVLNKLDVKGKKVAIVISGGNIDVNMIDRIINKGLVKSGRKVFIETFVMDRPGALKELLGIVAELGANVLSVFHNRSAKEVPIGFAKIELELETVDEKHVEEIERVLIAKGYEVRIVG.

Lys-51 carries the N6-(pyridoxal phosphate)lysine modification. Pyridoxal 5'-phosphate is bound by residues Asn-78, 178–181 (GGGL), and Ser-301. The region spanning 326-401 (FIETFVMDRP…AKGYEVRIVG (76 aa)) is the ACT domain.

Belongs to the serine/threonine dehydratase family. In terms of assembly, homotetramer. Pyridoxal 5'-phosphate is required as a cofactor.

It carries out the reaction L-threonine = 2-oxobutanoate + NH4(+). The catalysed reaction is L-serine = pyruvate + NH4(+). Its pathway is amino-acid biosynthesis; L-isoleucine biosynthesis; 2-oxobutanoate from L-threonine: step 1/1. Activity is insensitive to allosteric regulators L-valine and L-isoleucine at low concentrations, while these L-amino acids are inhibitors at high concentrations. Is insensitive to ammonium chloride and AMP. Inhibited in the presence of aminoxyacetic acid (AOAA), an inhibitor of pyridoxal phosphate-dependent enzymes. Catalyzes the conversion of L-threonine to 2-oxobutanoate and ammonia. Can also use L-serine, but the catalytic efficiency toward L-threonine is about sixfold higher than that toward L-serine. Also shows weak activity toward L-allo-threonine, but cannot use the corresponding D-amino acids. Does not exhibit racemase activity toward various amino acids, including serine. Physiologically, is likely involved in the threonine-dependent pathway of isoleucine biosynthesis. This chain is L-threonine ammonia-lyase, found in Thermotoga maritima (strain ATCC 43589 / DSM 3109 / JCM 10099 / NBRC 100826 / MSB8).